The chain runs to 199 residues: GTP cyclohydrolase-2 (199 aa).

49–53 (RIHSE) is a GTP binding site. Residues Cys-54, Cys-65, and Cys-67 each coordinate Zn(2+). GTP-binding positions include Gln-70, 92–94 (EGR), and Thr-114. Catalysis depends on Asp-126, which acts as the Proton acceptor. Arg-128 serves as the catalytic Nucleophile. Thr-149 and Lys-154 together coordinate GTP. Residues 172-199 (ETGRNPHNSHYLETKRGKLGHLLEGDSE) are disordered.

Belongs to the GTP cyclohydrolase II family. The cofactor is Zn(2+).

It carries out the reaction GTP + 4 H2O = 2,5-diamino-6-hydroxy-4-(5-phosphoribosylamino)-pyrimidine + formate + 2 phosphate + 3 H(+). It functions in the pathway cofactor biosynthesis; riboflavin biosynthesis; 5-amino-6-(D-ribitylamino)uracil from GTP: step 1/4. Its function is as follows. Catalyzes the conversion of GTP to 2,5-diamino-6-ribosylamino-4(3H)-pyrimidinone 5'-phosphate (DARP), formate and pyrophosphate. The sequence is that of GTP cyclohydrolase-2 from Teredinibacter turnerae (strain ATCC 39867 / T7901).